Reading from the N-terminus, the 626-residue chain is Colicin-Ib (626 aa).

Residues 276 to 286 (QQLTQQKNTPD) are compositionally biased toward polar residues. Positions 276 to 308 (QQLTQQKNTPDGKTIVSPEKFPGRSSTNHSIVV) are disordered. A helical transmembrane segment spans residues 588–612 (FSVMLGTPVGILGFAIIMAAVSALV).

This sequence belongs to the channel forming colicin family.

It is found in the host membrane. This colicin is a channel-forming colicin. This class of transmembrane toxins depolarize the cytoplasmic membrane, leading to dissipation of cellular energy. Functionally, colicins are polypeptide toxins produced by and active against E.coli and closely related bacteria. The polypeptide is Colicin-Ib (cib) (Escherichia coli).